The following is a 325-amino-acid chain: Protein FAM50B (325 aa).

The residue at position 2 (Ala-2) is an N-acetylalanine. Residues 137–160 (RRAGNLGKNPDVDTSFLPDRDREE) are disordered.

Belongs to the FAM50 family.

This Macaca fascicularis (Crab-eating macaque) protein is Protein FAM50B (FAM50B).